The sequence spans 2048 residues: Myoferlin (2048 aa).

The 101-residue stretch at 1–101 (MLRVIVESAT…IGDQNRSLPY (101 aa)) folds into the C2 1 domain. Topologically, residues 1–2012 (MLRVIVESAT…MRFIVWRRFK (2012 aa)) are cytoplasmic. The segment at 124-176 (YTPPSAPHPNDPSGTSVPGMGEEEEEDQGDEDRVDGIVRGPGPKGPSGTVSEA) is disordered. Over residues 144 to 156 (GEEEEEDQGDEDR) the composition is skewed to acidic residues. A phosphoserine mark is found at Ser170 and Ser174. 2 C2 domains span residues 183–300 (TKGK…RKWL) and 339–475 (DSDD…EATT). The interval 186–281 (KSSRRMLSNK…RADCLMGEFK (96 aa)) is necessary for interaction with EHD2. The Ca(2+) site is built by Asp390, Asp396, Asp444, Asp446, and Asp452. Lys540 and Lys871 each carry N6-acetyllysine. C2 domains follow at residues 1110–1238 (GANT…LLWH) and 1269–1397 (LPSQ…GKED). Ca(2+) is bound by residues Asp1142, Asp1148, Asp1204, and Asp1206. N6-acetyllysine is present on Lys1494. C2 domains lie at 1523 to 1641 (PAPP…SHCG) and 1759 to 1907 (GPPG…EKCS). Ca(2+)-binding residues include Asp1556, Asp1562, Asp1611, Asp1613, Asp1878, Ser1881, and Asp1884. The segment covering 1964-1975 (EADERPAGKGRS) has biased composition (basic and acidic residues). The segment at 1964–1986 (EADERPAGKGRSEPNMNPKLDPP) is disordered. A helical membrane pass occupies residues 2013–2033 (WVIIGLLLLLILLLFVAVLLY). The Extracellular portion of the chain corresponds to 2034-2048 (SLPNYLSMKIVRPNA).

The protein belongs to the ferlin family. Interacts with EHD1. Interacts with EHD2; the interaction is direct. Interacts with DNM2 and KDR. Interacts with RIPOR2. It depends on Ca(2+) as a cofactor. Expressed in myoblasts (at protein level). Expressed in endothelial cells.

The protein localises to the cell membrane. The protein resides in the nucleus membrane. It localises to the cytoplasmic vesicle membrane. In terms of biological role, calcium/phospholipid-binding protein that plays a role in the plasmalemma repair mechanism of endothelial cells that permits rapid resealing of membranes disrupted by mechanical stress. Involved in endocytic recycling. Implicated in VEGF signal transduction by regulating the levels of the receptor KDR. The polypeptide is Myoferlin (Myof) (Mus musculus (Mouse)).